The following is a 366-amino-acid chain: Chorismate synthase (366 aa).

NADP(+)-binding residues include arginine 48 and arginine 54. Residues 125–127 (RSS), 238–239 (NA), glycine 278, 293–297 (KPTSS), and arginine 319 each bind FMN.

This sequence belongs to the chorismate synthase family. As to quaternary structure, homotetramer. FMNH2 serves as cofactor.

It carries out the reaction 5-O-(1-carboxyvinyl)-3-phosphoshikimate = chorismate + phosphate. It functions in the pathway metabolic intermediate biosynthesis; chorismate biosynthesis; chorismate from D-erythrose 4-phosphate and phosphoenolpyruvate: step 7/7. Functionally, catalyzes the anti-1,4-elimination of the C-3 phosphate and the C-6 proR hydrogen from 5-enolpyruvylshikimate-3-phosphate (EPSP) to yield chorismate, which is the branch point compound that serves as the starting substrate for the three terminal pathways of aromatic amino acid biosynthesis. This reaction introduces a second double bond into the aromatic ring system. In Burkholderia orbicola (strain MC0-3), this protein is Chorismate synthase.